The sequence spans 499 residues: Glycerol kinase (499 aa).

T13 provides a ligand contact to ADP. ATP is bound by residues T13, T14, and S15. A sn-glycerol 3-phosphate-binding site is contributed by T13. R17 contacts ADP. 4 residues coordinate sn-glycerol 3-phosphate: R83, E84, Y135, and D244. Positions 83, 84, 135, 244, and 245 each coordinate glycerol. ADP is bound by residues T266 and G309. 4 residues coordinate ATP: T266, G309, Q313, and G410. G410 and N414 together coordinate ADP.

The protein belongs to the FGGY kinase family.

The catalysed reaction is glycerol + ATP = sn-glycerol 3-phosphate + ADP + H(+). Its pathway is polyol metabolism; glycerol degradation via glycerol kinase pathway; sn-glycerol 3-phosphate from glycerol: step 1/1. Its activity is regulated as follows. Inhibited by fructose 1,6-bisphosphate (FBP). Functionally, key enzyme in the regulation of glycerol uptake and metabolism. Catalyzes the phosphorylation of glycerol to yield sn-glycerol 3-phosphate. The chain is Glycerol kinase from Paraburkholderia xenovorans (strain LB400).